The chain runs to 473 residues: 3-isopropylmalate dehydratase large subunit (473 aa).

3 residues coordinate [4Fe-4S] cluster: Cys-349, Cys-409, and Cys-412.

It belongs to the aconitase/IPM isomerase family. LeuC type 1 subfamily. Heterodimer of LeuC and LeuD. [4Fe-4S] cluster is required as a cofactor.

The catalysed reaction is (2R,3S)-3-isopropylmalate = (2S)-2-isopropylmalate. Its pathway is amino-acid biosynthesis; L-leucine biosynthesis; L-leucine from 3-methyl-2-oxobutanoate: step 2/4. Its function is as follows. Catalyzes the isomerization between 2-isopropylmalate and 3-isopropylmalate, via the formation of 2-isopropylmaleate. This chain is 3-isopropylmalate dehydratase large subunit, found in Gloeobacter violaceus (strain ATCC 29082 / PCC 7421).